The chain runs to 621 residues: Putative zinc metalloprotease CPn_0344/CP_0416/CPj0344/CpB0350 (621 aa).

A Zn(2+)-binding site is contributed by histidine 20. Glutamate 21 is an active-site residue. A Zn(2+)-binding site is contributed by histidine 24. Transmembrane regions (helical) follow at residues 103 to 125, 561 to 583, and 596 to 613; these read ILVL…SILY, VLNL…WEIV, and ILVP…FLTF.

Belongs to the peptidase M50B family. It depends on Zn(2+) as a cofactor.

The protein resides in the cell inner membrane. The sequence is that of Putative zinc metalloprotease CPn_0344/CP_0416/CPj0344/CpB0350 from Chlamydia pneumoniae (Chlamydophila pneumoniae).